Consider the following 391-residue polypeptide: Phosphoprotein (391 aa).

The interval 1 to 194 (MDQFIKQDET…GSLSGATLYA (194 aa)) is N-terminus domain. A phosphothreonine mark is found at T10, T16, T91, T150, and T165. Position 188 is a phosphoserine (S188). Residues 216–279 (ISANEIMDLL…MATVKIMDPG (64 aa)) form a multimerization region. Residues 218–245 (ANEIMDLLRGMDARLQHLEQKVDKVLAQ) adopt a coiled-coil conformation. The residue at position 250 (T250) is a Phosphothreonine. Residue S257 is modified to Phosphoserine. Phosphothreonine occurs at positions 258 and 282. Residues S292 and S294 each carry the phosphoserine modification. Position 298 is a phosphothreonine (T298). Phosphoserine occurs at positions 301 and 374. Positions 343–391 (AGQKVMITKMITDCVANPQMKQAFEQRLAKASTEDALNDIKRDIIRSAI) are interaction with the nucleoprotein. T375 carries the phosphothreonine modification.

The protein belongs to the rubulavirus/avulavirus P protein family. As to quaternary structure, homotetramer. Interacts (via multimerization domain) with polymerase L; this interaction forms the polymerase L-P complex. Interacts (via N-terminus) with N0 (via Ncore); this interaction allows P to chaperon N0 to avoid N polymerization before encapsidation. Interacts (via C-terminus) with N-RNA template; this interaction positions the polymerase on the template for both transcription and replication. Interacts with host RPS6KB1 kinase; this interaction may play a role in the viral replication and transcription.

The protein localises to the virion. In terms of biological role, essential cofactor of the RNA polymerase L that plays a central role in the transcription and replication by forming the polymerase complex with RNA polymerase L and recruiting L to the genomic N-RNA template for RNA synthesis. Also plays a central role in the encapsidation of nascent RNA chains by forming the encapsidation complex with the nucleocapsid protein N (N-P complex). Acts as a chaperone for newly synthesized free N protein, so-called N0, allowing encapsidation of nascent RNA chains during replication. The nucleoprotein protein N prevents excessive phosphorylation of P, which leads to down-regulation of viral transcription/ replication. Participates, together with N, in the formation of viral factories (viroplasms), which are large inclusions in the host cytoplasm where replication takes place. The polypeptide is Phosphoprotein (Homo sapiens (Human)).